A 362-amino-acid polypeptide reads, in one-letter code: Peptide chain release factor 1 (362 aa).

Residue Gln-237 is modified to N5-methylglutamine.

The protein belongs to the prokaryotic/mitochondrial release factor family. In terms of processing, methylated by PrmC. Methylation increases the termination efficiency of RF1.

It is found in the cytoplasm. Peptide chain release factor 1 directs the termination of translation in response to the peptide chain termination codons UAG and UAA. The chain is Peptide chain release factor 1 from Legionella pneumophila (strain Paris).